Here is a 234-residue protein sequence, read N- to C-terminus: L-cystine transport system permease protein TcyB (234 aa).

The next 5 membrane-spanning stretches (helical) occupy residues 8 to 28, 36 to 56, 78 to 98, 100 to 120, and 199 to 219; these read ALTL…WPIL, IPLT…TALA, TPLL…NVTL, PFPS…SEII, and ILVI…LLSL. The 190-residue stretch at 32–221 folds into the ABC transmembrane type-1 domain; it reads IYYTIPLTIL…IICFLLSLVQ (190 aa).

It belongs to the binding-protein-dependent transport system permease family. The complex is composed of two ATP-binding proteins (TcyC), two transmembrane proteins (TcyB) and a solute-binding protein (TcyA).

The protein resides in the cell membrane. Its function is as follows. Part of the ABC transporter complex TcyABC involved in L-cystine import. Probably responsible for the translocation of the substrate across the membrane. The protein is L-cystine transport system permease protein TcyB (tcyB) of Bacillus subtilis (strain 168).